Reading from the N-terminus, the 946-residue chain is Protocadherin alpha-10 (946 aa).

The N-terminal stretch at 1–30 (MSCVAMKYCHESWCLLLSLLLFAIWEPGSG) is a signal peptide. Cadherin domains follow at residues 31 to 134 (QLRY…PPVF), 135 to 243 (PTTE…APAF), 244 to 351 (DRAI…APKI), 352 to 456 (IVTS…APAF), 457 to 566 (AQSE…APTL), and 582 to 679 (VPRS…APKA). Over 31-697 (QLRYSVPEEA…ASESSVVDVN (667 aa)) the chain is Extracellular. N258 carries an N-linked (GlcNAc...) asparagine glycan. N-linked (GlcNAc...) asparagine glycosylation is present at N549. A helical transmembrane segment spans residues 698–718 (VYLIIAICAVSSLLVLTLVLY). Topologically, residues 719–946 (TALRCSALPT…GNSTTDNSDQ (228 aa)) are cytoplasmic. 6 PXXP repeats span residues 734 to 737 (PGKP), 774 to 777 (PSVP), 795 to 798 (PRQP), 828 to 831 (PGGP), 869 to 872 (PGNP), and 887 to 890 (PGSP). The segment at 734–890 (PGKPMLVCSS…PDKFIIPGSP (157 aa)) is 6 X 4 AA repeats of P-X-X-P. Disordered stretches follow at residues 826–852 (AGPG…EVSP) and 865–946 (FKYG…NSDQ). Residues 905–919 (DKSDFITFGKKEETK) are compositionally biased toward basic and acidic residues.

Its subcellular location is the cell membrane. Its function is as follows. Potential calcium-dependent cell-adhesion protein. May be involved in the establishment and maintenance of specific neuronal connections in the brain. This is Protocadherin alpha-10 from Mus musculus (Mouse).